Here is a 337-residue protein sequence, read N- to C-terminus: MSAVRIGPYTVHNGLILAPMAGVTDQPFRQLCRQLGAGLVVSEMVTSDMSLWNSRKSRLRMIHAGDPEPRSVQIAGGDAQMMADAARANVELGAQIIDINMGCPAKKVCNKAAGSALLKDEQLVNDILQAVVAAVDVPVTLKIRTGWDRDNRNGLTVAKIAEQAGIQALAVHGRTRADLYTGEAEYDTIAMIKQAVSIPVFANGDIDSPEKARHVLQATGADGLLIGRAAQGRPWIFREIEHYLLTGKTLPALQSSEVERILLEHLAALHVFYGDVMGVRIARKHVGWYLATLPGAREFRALFNRLEDTEAQCANVREFFSQGCKGPDNQNDKEVAA.

FMN is bound by residues 19-21 and glutamine 73; that span reads PMA. Cysteine 103 (proton donor) is an active-site residue. FMN is bound by residues lysine 142, 203 to 205, and 227 to 228; these read NGD and GR.

It belongs to the Dus family. DusB subfamily. FMN serves as cofactor.

The enzyme catalyses a 5,6-dihydrouridine in tRNA + NAD(+) = a uridine in tRNA + NADH + H(+). It carries out the reaction a 5,6-dihydrouridine in tRNA + NADP(+) = a uridine in tRNA + NADPH + H(+). Catalyzes the synthesis of 5,6-dihydrouridine (D), a modified base found in the D-loop of most tRNAs, via the reduction of the C5-C6 double bond in target uridines. In Pseudomonas syringae pv. tomato (strain ATCC BAA-871 / DC3000), this protein is tRNA-dihydrouridine synthase B.